A 171-amino-acid polypeptide reads, in one-letter code: 3-hydroxydecanoyl-[acyl-carrier-protein] dehydratase (171 aa).

Residue His70 is part of the active site.

The protein belongs to the thioester dehydratase family. FabA subfamily. Homodimer.

The protein resides in the cytoplasm. It catalyses the reaction a (3R)-hydroxyacyl-[ACP] = a (2E)-enoyl-[ACP] + H2O. It carries out the reaction (3R)-hydroxydecanoyl-[ACP] = (2E)-decenoyl-[ACP] + H2O. The enzyme catalyses (2E)-decenoyl-[ACP] = (3Z)-decenoyl-[ACP]. It participates in lipid metabolism; fatty acid biosynthesis. Functionally, necessary for the introduction of cis unsaturation into fatty acids. Catalyzes the dehydration of (3R)-3-hydroxydecanoyl-ACP to E-(2)-decenoyl-ACP and then its isomerization to Z-(3)-decenoyl-ACP. Can catalyze the dehydratase reaction for beta-hydroxyacyl-ACPs with saturated chain lengths up to 16:0, being most active on intermediate chain length. The polypeptide is 3-hydroxydecanoyl-[acyl-carrier-protein] dehydratase (Xanthomonas campestris pv. campestris (strain 8004)).